Consider the following 328-residue polypeptide: Homeobox protein DLX-2 (328 aa).

Polar residues-rich tracts occupy residues 16-28 (QIAA…QHQQ) and 52-72 (ESPT…NQQH). Disordered stretches follow at residues 16 to 81 (QIAA…GGGG), 211 to 270 (WKSG…SSPS), and 300 to 328 (LHPT…GTIF). The homeobox DNA-binding region spans 152-211 (VRKPRTIYSSFQLAALQRRFQKTQYLALPERAELAASLGLTQTQVKIWFQNRRSKFKKMW). Ser-232 bears the Phosphoserine mark. Positions 250–264 (AGGGGPGSGGSGAGS) are enriched in gly residues.

Belongs to the distal-less homeobox family. In terms of assembly, interacts (via homeobox DNA-binding domain) with POU4F2; this interaction enhances retinal ganglion cell (RGC) differentiation.

The protein localises to the nucleus. Its function is as follows. Acts as a transcriptional activator. Activates transcription of CGA/alpha-GSU, via binding to the downstream activin regulatory element (DARE) in the gene promoter. Plays a role in terminal differentiation of interneurons, such as amacrine and bipolar cells in the developing retina. Likely to play a regulatory role in the development of the ventral forebrain. May play a role in craniofacial patterning and morphogenesis. The sequence is that of Homeobox protein DLX-2 (DLX2) from Homo sapiens (Human).